A 116-amino-acid polypeptide reads, in one-letter code: Mercuric transport protein MerT (116 aa).

Transmembrane regions (helical) follow at residues 16–36 (LAAI…ALGF) and 46–66 (VLEP…FFAW). Hg(2+) contacts are provided by Cys24 and Cys25. Residues Cys76 and Cys82 each contribute to the Hg(2+) site. A helical transmembrane segment spans residues 94–114 (IFWFVAVLVLVALGFPYVMPF).

It belongs to the MerT family.

The protein localises to the cell inner membrane. Involved in mercury resistance. Probably transfers a mercuric ion from the periplasmic Hg(2+)-binding protein MerP to the cytoplasmic mercuric reductase MerA. In Acinetobacter calcoaceticus, this protein is Mercuric transport protein MerT.